We begin with the raw amino-acid sequence, 467 residues long: Cytochrome P450 monooxygenase azaI (467 aa).

The signal sequence occupies residues 1 to 28; that stretch reads MESLAQLPGIFLPLAGCVLALSLSALLA. Cysteine 411 lines the heme pocket.

Belongs to the cytochrome P450 family. The cofactor is heme.

The protein operates within secondary metabolite biosynthesis. In terms of biological role, cytochrome P450 monooxygenase; part of the gene cluster that mediates the biosynthesis of azaphilones, a class of fungal metabolites characterized by a highly oxygenated pyrano-quinone bicyclic core and exhibiting a broad range of bioactivities. In the first step, the non-reducing polyketide synthase azaA forms the hexaketide precursor from successive condensations of five malonyl-CoA units, presumably with a simple acetyl-CoA starter unit. The reactive polyketide chain then undergoes a PT-mediated C2-C7 cyclization to afford the aromatic ring and is eventually released as an aldehyde through the R-domain. The putative ketoreductase azaE is proposed to catalyze the reduction of the terminal ketone resulting in the early culture product FK17-P2a. The monooxygenase azaH was demonstrated to be the only enzyme required to convert FK17-P2a to azanigerone E. AzaH first hydroxylates the benzaldehyde intermediate FK17-P2a at C4, which triggers the formation of the pyran-ring to afford azanigerone E. In parallel, the 2,4-dimethylhexanoyl chain is synthesized by the HR-PKS azaB and is proposed to be transferred to the C4-hydroxyl of azanigerone E by the acyltransferase azaD directly from the ACP domain of azaB. Alternatively, the 2,4-dimethyl-hexanoyl chain may be offloaded from the HR-PKS as a carboxylic acid and converted to an acyl-CoA by azaF. The resulting acyl-CoA molecule could then be taken up as a substrate by AzaD to form azanigerone B. To yield the carboxylic acid substituent in azanigerone A, the hydroxypropyl side chain of azanigerone B would need to undergo a C-C oxidative cleavage catalyzed by cytochrome P450 AzaI. AzaI is proposed to act on a vicinal diol that leads to a C-C bond scission either through an alkoxyradical intermediate or a peroxy complex. In the biosynthesis of azanigerone A, azanigerone B first undergoes hydroxylation at C10, possibly catalyzed by one of the two FAD-dependent monooxygenases encoded in the cluster, azaG or azaL, resulting in the vicinal diol azanigerone C. Oxidative cleavage of azanigerone C by azaI would yield the corresponding aldehyde derivative of azanigerone A. Finally, the dehydrogenase azaJ is proposed to convert the aldehyde functional group into the carboxylic acid, completing the conversion from azanigerone B to azanigerone A. Alternatively, the oxidation of aldehyde to carboxylic acid may be catalyzed by the same P450 enzyme azaI via consecutive oxidation or by endogenous alcohol dehydrogenase. The protein is Cytochrome P450 monooxygenase azaI of Aspergillus niger (strain ATCC 1015 / CBS 113.46 / FGSC A1144 / LSHB Ac4 / NCTC 3858a / NRRL 328 / USDA 3528.7).